A 209-amino-acid polypeptide reads, in one-letter code: MTQQCNCSEGSCGGTRYEELVLERMLYSARLKESVARRDSDVIVAMASMIADTFREGGKVLLCGNGGSAADAQHLAAEFTIRYRSSVHRPALPAIALSTDTSALTAGANDLGFDEVFVRLTEAYGCPGDILIGLSTSGNSASVLKALEFARKRGLKTLALLGGDGGAIKPHADLAVVVPHTGSADRIQECHIAVGHVIVELVEKMMGYD.

Residues 50–209 (IADTFREGGK…ELVEKMMGYD (160 aa)) enclose the SIS domain. 65–67 (NGG) is a binding site for substrate. The Zn(2+) site is built by H74 and E78. Substrate-binding positions include E78, 109–110 (ND), 135–137 (STS), S140, and Q188. Zn(2+)-binding residues include Q188 and H196.

It belongs to the SIS family. GmhA subfamily. The cofactor is Zn(2+).

The protein resides in the cytoplasm. The catalysed reaction is 2 D-sedoheptulose 7-phosphate = D-glycero-alpha-D-manno-heptose 7-phosphate + D-glycero-beta-D-manno-heptose 7-phosphate. The protein operates within carbohydrate biosynthesis; D-glycero-D-manno-heptose 7-phosphate biosynthesis; D-glycero-alpha-D-manno-heptose 7-phosphate and D-glycero-beta-D-manno-heptose 7-phosphate from sedoheptulose 7-phosphate: step 1/1. Catalyzes the isomerization of sedoheptulose 7-phosphate in D-glycero-D-manno-heptose 7-phosphate. The polypeptide is Phosphoheptose isomerase (Chlorobaculum tepidum (strain ATCC 49652 / DSM 12025 / NBRC 103806 / TLS) (Chlorobium tepidum)).